The sequence spans 432 residues: Glutamyl-tRNA reductase (432 aa).

Substrate-binding positions include 55–58 (TCNR), serine 114, 119–121 (ETQ), and glutamine 125. The active-site Nucleophile is the cysteine 56. 194–199 (GAGEMI) serves as a coordination point for NADP(+).

The protein belongs to the glutamyl-tRNA reductase family. Homodimer.

It carries out the reaction (S)-4-amino-5-oxopentanoate + tRNA(Glu) + NADP(+) = L-glutamyl-tRNA(Glu) + NADPH + H(+). It functions in the pathway porphyrin-containing compound metabolism; protoporphyrin-IX biosynthesis; 5-aminolevulinate from L-glutamyl-tRNA(Glu): step 1/2. Functionally, catalyzes the NADPH-dependent reduction of glutamyl-tRNA(Glu) to glutamate 1-semialdehyde (GSA). In Burkholderia lata (strain ATCC 17760 / DSM 23089 / LMG 22485 / NCIMB 9086 / R18194 / 383), this protein is Glutamyl-tRNA reductase.